The sequence spans 251 residues: MSEATALSPAEFEQALRAKGAYYHIYHPFHVAMYEGRATREQIQGWVANRFYYQVNIPLKDAAILANCPDREIRREWIQRLLDHDGAPGEDGGIEAWLRLGQAVGLDPDQLRSQELVLPGVRFAVDAYVNFARRANWQEAASSSLTELFAPQIHQSRLDSWPQHYPWIDPAGYEYFRTRLGQARRDVEHGLAITLQHYTTYEGQQRMLEILQFKLDILWSMLDAMSMAYELNRPPYHSVTDQRVWHKGITL.

Belongs to the PqqC family.

The enzyme catalyses 6-(2-amino-2-carboxyethyl)-7,8-dioxo-1,2,3,4,7,8-hexahydroquinoline-2,4-dicarboxylate + 3 O2 = pyrroloquinoline quinone + 2 H2O2 + 2 H2O + H(+). The protein operates within cofactor biosynthesis; pyrroloquinoline quinone biosynthesis. In terms of biological role, ring cyclization and eight-electron oxidation of 3a-(2-amino-2-carboxyethyl)-4,5-dioxo-4,5,6,7,8,9-hexahydroquinoline-7,9-dicarboxylic-acid to PQQ. The polypeptide is Pyrroloquinoline-quinone synthase (Pseudomonas syringae pv. syringae (strain B728a)).